A 166-amino-acid chain; its full sequence is Lipoprotein signal peptidase (166 aa).

Helical transmembrane passes span 12-32, 70-90, and 102-122; these read WLWL…LILQ, WFFA…MYRS, and ALII…GFVV. Active-site residues include Asp-123 and Asp-141. The chain crosses the membrane as a helical span at residues 137–157; sequence FNLADSAICIGAALIVLEGFL.

The protein belongs to the peptidase A8 family.

The protein resides in the cell inner membrane. The enzyme catalyses Release of signal peptides from bacterial membrane prolipoproteins. Hydrolyzes -Xaa-Yaa-Zaa-|-(S,diacylglyceryl)Cys-, in which Xaa is hydrophobic (preferably Leu), and Yaa (Ala or Ser) and Zaa (Gly or Ala) have small, neutral side chains.. The protein operates within protein modification; lipoprotein biosynthesis (signal peptide cleavage). This protein specifically catalyzes the removal of signal peptides from prolipoproteins. The protein is Lipoprotein signal peptidase of Salmonella choleraesuis (strain SC-B67).